We begin with the raw amino-acid sequence, 506 residues long: Aldehyde dehydrogenase (506 aa).

218 to 224 is an NAD(+) binding site; that stretch reads GFGLEAG. Residues Glu262 and Cys301 contribute to the active site.

Belongs to the aldehyde dehydrogenase family.

It carries out the reaction an aldehyde + NAD(+) + H2O = a carboxylate + NADH + 2 H(+). In Rhodospirillum rubrum (strain ATCC 11170 / ATH 1.1.1 / DSM 467 / LMG 4362 / NCIMB 8255 / S1), this protein is Aldehyde dehydrogenase.